The chain runs to 218 residues: MVKSNLQRILNSHCFAREKEGKKQCESSIMEALSSSITDRMASPTVCCSSTTGPGPLWCSDAPHPPLKIPGGRGNGARDHPSTTQTLYSDRKLTVTEEPAGPGRPQILHFQSRPAAARLIQWEAVLRGDGLFVEIPCEPFPDGSKESFISLLEFAEEHLKVVSVFVCFYKNREDRVKLVRTFSFLGFEMVKPGHALVPARPDVLFMAYNFDRDSSDED.

This sequence belongs to the ODC antizyme family. As to quaternary structure, interacts with ODC1 and thereby sterically blocks ODC homodimerization. As to expression, expressed ubiquitously in 24 hours embryos, with highest levels in telencephalon, lens, retina, cerebellum and hindbrain primordia.

Functionally, ornithine decarboxylase (ODC) antizyme protein that negatively regulates ODC activity and intracellular polyamine biosynthesis and uptake in response to increased intracellular polyamine levels. Binds to ODC monomers, inhibiting the assembly of the functional ODC homodimers. Does not target the ODC monomers for degradation, which allows a protein synthesis-independent restoration of ODC activity. The sequence is that of Ornithine decarboxylase antizyme 2 (oaz1b) from Danio rerio (Zebrafish).